The following is a 246-amino-acid chain: Acetoacetate decarboxylase (246 aa).

Catalysis depends on Lys-116, which acts as the Schiff-base intermediate with acetoacetate.

This sequence belongs to the ADC family.

It catalyses the reaction acetoacetate + H(+) = acetone + CO2. Functionally, catalyzes the conversion of acetoacetate to acetone and carbon dioxide. The protein is Acetoacetate decarboxylase of Bordetella avium (strain 197N).